The primary structure comprises 273 residues: Dermonecrotic toxin LdSicTox-alphaIB1av (273 aa).

Residue His-5 is part of the active site. Mg(2+)-binding residues include Glu-25 and Asp-27. Residue His-41 is the Nucleophile of the active site. 2 cysteine pairs are disulfide-bonded: Cys-45–Cys-51 and Cys-47–Cys-190. A Mg(2+)-binding site is contributed by Asp-85. Asn-250 carries an N-linked (GlcNAc...) asparagine glycan.

The protein belongs to the arthropod phospholipase D family. Class II subfamily. Mg(2+) is required as a cofactor. As to expression, expressed by the venom gland.

Its subcellular location is the secreted. The catalysed reaction is an N-(acyl)-sphingosylphosphocholine = an N-(acyl)-sphingosyl-1,3-cyclic phosphate + choline. It catalyses the reaction an N-(acyl)-sphingosylphosphoethanolamine = an N-(acyl)-sphingosyl-1,3-cyclic phosphate + ethanolamine. It carries out the reaction a 1-acyl-sn-glycero-3-phosphocholine = a 1-acyl-sn-glycero-2,3-cyclic phosphate + choline. The enzyme catalyses a 1-acyl-sn-glycero-3-phosphoethanolamine = a 1-acyl-sn-glycero-2,3-cyclic phosphate + ethanolamine. In terms of biological role, dermonecrotic toxins cleave the phosphodiester linkage between the phosphate and headgroup of certain phospholipids (sphingolipid and lysolipid substrates), forming an alcohol (often choline) and a cyclic phosphate. This toxin acts on sphingomyelin (SM). It may also act on ceramide phosphoethanolamine (CPE), lysophosphatidylcholine (LPC) and lysophosphatidylethanolamine (LPE), but not on lysophosphatidylserine (LPS), and lysophosphatidylglycerol (LPG). It acts by transphosphatidylation, releasing exclusively cyclic phosphate products as second products. Induces dermonecrosis, hemolysis, increased vascular permeability, edema, inflammatory response, and platelet aggregation. The sequence is that of Dermonecrotic toxin LdSicTox-alphaIB1av from Loxosceles deserta (Desert recluse spider).